The following is a 949-amino-acid chain: MAM domain-containing glycosylphosphatidylinositol anchor protein 2 (949 aa).

The signal sequence occupies residues 1 to 25 (MDLVYGLVWLLTVLLEGISGQGVYA). Ig-like domains are found at residues 27–127 (PTVR…IRVD) and 134–232 (PVVT…KMVS). Disulfide bonds link Cys-62–Cys-110 and Cys-159–Cys-216. 3 N-linked (GlcNAc...) asparagine glycosylation sites follow: Asn-92, Asn-213, and Asn-237. Ig-like domains lie at 242–328 (PSIK…NIIV), 340–436 (PDPY…VNIS), 442–533 (PNLT…ALVQ), and 540–627 (PAVE…FLVT). Intrachain disulfides connect Cys-264/Cys-310 and Cys-359/Cys-417. Residues Asn-434, Asn-443, Asn-504, Asn-610, and Asn-703 are each glycosylated (N-linked (GlcNAc...) asparagine). 2 cysteine pairs are disulfide-bonded: Cys-465–Cys-515 and Cys-561–Cys-611. Positions 638–738 (DTYNPVWQNR…TIRVIKYTGE (101 aa)) constitute a Fibronectin type-III domain. Positions 739 to 914 (FHCGFEDGNI…VSIAEGECAK (176 aa)) constitute an MAM domain. Asp-924 carries the GPI-anchor amidated aspartate lipid modification. Positions 925-949 (GAVGILVHIWLFPVIILISILSPRR) are cleaved as a propeptide — removed in mature form.

Interacts (through the Ig-like domains) with NLGN2.

Its subcellular location is the cell membrane. Functionally, may be involved in cell-cell interactions. The sequence is that of MAM domain-containing glycosylphosphatidylinositol anchor protein 2 (Mdga2) from Mus musculus (Mouse).